Reading from the N-terminus, the 295-residue chain is Movement protein BC1 (295 aa).

This sequence belongs to the begomovirus movement protein BC1 family. As to quaternary structure, binds to dimeric supercoiled plasmid DNA. Post-translationally, phosphorylated.

Its subcellular location is the host cell membrane. It localises to the host microsome membrane. The protein resides in the host endoplasmic reticulum membrane. Transports viral genome to neighboring plant cells directly through plasmosdesmata, without any budding. The movement protein allows efficient cell to cell propagation, by bypassing the host cell wall barrier. Begomovirus genome is shuttled out of nucleus by Nuclear shuttle protein (NSP) and the movement protein transports the DNA-NSP complex to cell plasmodesmata and facilitates further movement across the cell wall. The sequence is that of Movement protein BC1 from Brassica oleracea (Wild cabbage).